A 54-amino-acid chain; its full sequence is Large ribosomal subunit protein bL33B (54 aa).

This sequence belongs to the bacterial ribosomal protein bL33 family.

This is Large ribosomal subunit protein bL33B from Saccharopolyspora erythraea (strain ATCC 11635 / DSM 40517 / JCM 4748 / NBRC 13426 / NCIMB 8594 / NRRL 2338).